A 499-amino-acid polypeptide reads, in one-letter code: 2,3-bisphosphoglycerate-independent phosphoglycerate mutase (499 aa).

Mn(2+)-binding residues include D10 and S60. S60 serves as the catalytic Phosphoserine intermediate. Substrate is bound by residues H121, 151–152 (RD), R182, R188, 253–256 (RPDR), and K326. Mn(2+)-binding residues include D391, H395, D434, H435, and H452.

The protein belongs to the BPG-independent phosphoglycerate mutase family. In terms of assembly, monomer. It depends on Mn(2+) as a cofactor.

The enzyme catalyses (2R)-2-phosphoglycerate = (2R)-3-phosphoglycerate. Its pathway is carbohydrate degradation; glycolysis; pyruvate from D-glyceraldehyde 3-phosphate: step 3/5. In terms of biological role, catalyzes the interconversion of 2-phosphoglycerate and 3-phosphoglycerate. This chain is 2,3-bisphosphoglycerate-independent phosphoglycerate mutase, found in Metamycoplasma hominis (strain ATCC 23114 / DSM 25592 / NBRC 14850 / NCTC 10111 / PG21) (Mycoplasma hominis).